The following is a 165-amino-acid chain: Putative 4-hydroxy-4-methyl-2-oxoglutarate aldolase (165 aa).

Substrate is bound by residues 80 to 83 (GGNL) and arginine 102. Residue aspartate 103 coordinates a divalent metal cation.

Belongs to the class II aldolase/RraA-like family. In terms of assembly, homotrimer. It depends on a divalent metal cation as a cofactor.

The catalysed reaction is 4-hydroxy-4-methyl-2-oxoglutarate = 2 pyruvate. The enzyme catalyses oxaloacetate + H(+) = pyruvate + CO2. Functionally, catalyzes the aldol cleavage of 4-hydroxy-4-methyl-2-oxoglutarate (HMG) into 2 molecules of pyruvate. Also contains a secondary oxaloacetate (OAA) decarboxylase activity due to the common pyruvate enolate transition state formed following C-C bond cleavage in the retro-aldol and decarboxylation reactions. The sequence is that of Putative 4-hydroxy-4-methyl-2-oxoglutarate aldolase from Burkholderia mallei (strain NCTC 10247).